Reading from the N-terminus, the 252-residue chain is Acyl-coenzyme A diphosphatase FITM2 (252 aa).

At 1–25 the chain is on the cytoplasmic side; it reads MAAAVAGSLVDKLVCLWRQPYTRIY. A helical transmembrane segment spans residues 26–46; sequence LPHLFFCISLVGSVLKNAELV. At 47–59 the chain is on the lumenal side; the sequence is PESYFSSSRNVLN. The chain crosses the membrane as a helical span at residues 60 to 80; it reads LYFVKVSWGWTIVLLLPFIAY. Over 81–94 the chain is Cytoplasmic; that stretch reads SNFYIKSHMFALRR. The helical transmembrane segment at 95 to 115 threads the bilayer; sequence LTSLLVATLVWYICTETFFYI. Residues 116 to 156 lie on the Lumenal side of the membrane; it reads EDITGSCYESNTMVVIRGEFDTKAACRKAGFFWDGFDISGH. His-156 is an active-site residue. Residues 157 to 177 form a helical membrane-spanning segment; the sequence is SFILSYSSLVIMEEMVPMLHI. The Cytoplasmic segment spans residues 178–190; that stretch reads QPAYRNPPLDCLY. A helical membrane pass occupies residues 191-211; the sequence is LALNVIVAIWIWMFGCTSVYF. The active site involves His-212. At 212-223 the chain is on the lumenal side; it reads HDIIDKILGTSC. A helical membrane pass occupies residues 224–244; that stretch reads GILGWYMTYKVWYVKLFSPGL. Residues 245–252 lie on the Cytoplasmic side of the membrane; the sequence is PPQPKQHT.

It belongs to the FIT family. FIT2 subfamily. Widely expressed.

Its subcellular location is the endoplasmic reticulum membrane. It catalyses the reaction an acyl-CoA + H2O = an acyl-4'-phosphopantetheine + adenosine 3',5'-bisphosphate + 2 H(+). Fatty acyl-coenzyme A (CoA) diphosphatase that hydrolyzes fatty acyl-CoA to yield acyl-4'-phosphopantetheine and adenosine 3',5'-bisphosphate. Preferentially hydrolyzes unsaturated long-chain acyl-CoA substrates in the endoplasmic reticulum (ER) lumen. This catalytic activity is required for maintaining ER structure and for lipid droplets (LDs) biogenesis, which are lipid storage organelles involved in maintaining lipid and energy homeostasis. Required for lipid droplet accumulation in liver and intestine during embryogenesis. May directly bind to diacylglycerol (DAGs) and triacylglycerol, which is also important for LD biogenesis. May support directional budding of nacent LDs from the ER into the cytosol by reducing DAG levels at sites of LD formation. May play a role in the regulation of cell morphology, ER morphology and cytoskeletal organization. In Danio rerio (Zebrafish), this protein is Acyl-coenzyme A diphosphatase FITM2.